The primary structure comprises 422 residues: Tk-subtilisin (422 aa).

The first 24 residues, 1-24 (MKKSIALVLSIVLLAALFAVPASA), serve as a signal peptide directing secretion. A propeptide spanning residues 25–106 (GEQNTIRVIV…SWLGGGSTQP (82 aa)) is cleaved from the precursor. Residues 111-417 (PWGIERVKAP…YGVVRAALAV (307 aa)) enclose the Peptidase S8 domain. Residues Asp139, His177, and Ser348 each act as charge relay system in the active site.

The protein belongs to the peptidase S8 family. As to quaternary structure, monomer. It depends on Ca(2+) as a cofactor.

The protein localises to the secreted. Functionally, has a broad substrate specificity with a slight preference to large hydrophobic amino acid residues at the P1 position. This is Tk-subtilisin from Thermococcus kodakarensis (strain ATCC BAA-918 / JCM 12380 / KOD1) (Pyrococcus kodakaraensis (strain KOD1)).